The primary structure comprises 591 residues: Acetyltransferase spyB (591 aa).

Asn-114 carries an N-linked (GlcNAc...) asparagine glycan. A run of 9 helical transmembrane segments spans residues Gly-123 to Leu-143, Thr-168 to Leu-188, Leu-199 to Gly-219, Val-228 to Leu-248, Ser-309 to Ala-329, Ala-383 to Gly-403, Ile-453 to Ile-473, Ile-481 to Trp-501, and Leu-529 to Pro-549.

It belongs to the wax synthase family.

The protein localises to the membrane. The catalysed reaction is sartorypyrone F + acetyl-CoA = sartorypyrone G + CoA. It carries out the reaction sartorypyrone D + acetyl-CoA = sartorypyrone A + CoA. It participates in secondary metabolite biosynthesis; terpenoid biosynthesis. Its function is as follows. Acetyltransferase; part of the gene cluster that mediates the biosynthesis of meroterpenoids called sartorypyrones. SpyB catalyzes the last step of the pathway and is responsible for the acetylation of sartorypyrones D and F to produce sartorypyrones A and G, respectively. The biosynthesis of sartorypyrones begins with the production of triacetic acid lactone (TAL) by the NR-PKS spyA using one molecule of acetyl-CoA and two molecules of malonyl-CoA. The prenyltransferase spyF then conjugates geranylgeranyl pyrophosphate (GGPP) to TAL to form geranylgeranyl-triacetate lactone, for which the pathway-specific geranylgeranyl pyrophosphate synthase (GGPS) spyE is required to provide GGPP. Subsequently, geranylgeranyl-triacetate lactone is epoxidized at the terminal olein by the FAD-dependent monooxygenase spyC, followed by cyclization of the terpenoid component catalyzed by the terpene cyclase spyD to produce both the bicyclic sartorypyrone F and the monocyclic sartorypyrone D. Finally, the last step of the biosynthesis involves the acetylation of the meroterpenoids sartorypyrones D and F by the acetyltransferase SpyB to produce sartorypyrones A and G, respectively. In Aspergillus fumigatus (strain ATCC MYA-4609 / CBS 101355 / FGSC A1100 / Af293) (Neosartorya fumigata), this protein is Acetyltransferase spyB.